Consider the following 355-residue polypeptide: tRNA N6-adenosine threonylcarbamoyltransferase (355 aa).

Positions 113 and 117 each coordinate Fe cation. Substrate-binding positions include 135–139 (LASGG), Asp168, Gly181, and Asn279. Asp307 is a Fe cation binding site.

This sequence belongs to the KAE1 / TsaD family. Fe(2+) is required as a cofactor.

Its subcellular location is the cytoplasm. It carries out the reaction L-threonylcarbamoyladenylate + adenosine(37) in tRNA = N(6)-L-threonylcarbamoyladenosine(37) in tRNA + AMP + H(+). In terms of biological role, required for the formation of a threonylcarbamoyl group on adenosine at position 37 (t(6)A37) in tRNAs that read codons beginning with adenine. Is involved in the transfer of the threonylcarbamoyl moiety of threonylcarbamoyl-AMP (TC-AMP) to the N6 group of A37, together with TsaE and TsaB. TsaD likely plays a direct catalytic role in this reaction. The chain is tRNA N6-adenosine threonylcarbamoyltransferase from Bradyrhizobium sp. (strain BTAi1 / ATCC BAA-1182).